We begin with the raw amino-acid sequence, 432 residues long: Glutamyl-tRNA reductase (432 aa).

Residues 55–58, serine 114, 119–121, and glutamine 125 each bind substrate; these read TCNR and ETQ. Cysteine 56 serves as the catalytic Nucleophile. Residue 194–199 participates in NADP(+) binding; the sequence is GAGEMI.

This sequence belongs to the glutamyl-tRNA reductase family. As to quaternary structure, homodimer.

It carries out the reaction (S)-4-amino-5-oxopentanoate + tRNA(Glu) + NADP(+) = L-glutamyl-tRNA(Glu) + NADPH + H(+). The protein operates within porphyrin-containing compound metabolism; protoporphyrin-IX biosynthesis; 5-aminolevulinate from L-glutamyl-tRNA(Glu): step 1/2. Catalyzes the NADPH-dependent reduction of glutamyl-tRNA(Glu) to glutamate 1-semialdehyde (GSA). The chain is Glutamyl-tRNA reductase from Burkholderia orbicola (strain AU 1054).